A 211-amino-acid polypeptide reads, in one-letter code: Urease accessory protein UreF (211 aa).

The interval 68 to 93 (LAPDGADRETDARTPSPAARDASRSQ) is disordered.

This sequence belongs to the UreF family. As to quaternary structure, ureD, UreF and UreG form a complex that acts as a GTP-hydrolysis-dependent molecular chaperone, activating the urease apoprotein by helping to assemble the nickel containing metallocenter of UreC. The UreE protein probably delivers the nickel.

The protein localises to the cytoplasm. Functionally, required for maturation of urease via the functional incorporation of the urease nickel metallocenter. This Mycobacterium marinum (strain ATCC BAA-535 / M) protein is Urease accessory protein UreF.